A 292-amino-acid polypeptide reads, in one-letter code: Elongation factor Ts (292 aa).

The segment at 82-85 is involved in Mg(2+) ion dislocation from EF-Tu; sequence TDFV.

Belongs to the EF-Ts family.

Its subcellular location is the cytoplasm. Its function is as follows. Associates with the EF-Tu.GDP complex and induces the exchange of GDP to GTP. It remains bound to the aminoacyl-tRNA.EF-Tu.GTP complex up to the GTP hydrolysis stage on the ribosome. This chain is Elongation factor Ts, found in Legionella pneumophila subsp. pneumophila (strain Philadelphia 1 / ATCC 33152 / DSM 7513).